Here is a 161-residue protein sequence, read N- to C-terminus: MEYNTSELCDLYPDMVDVVEPMFESYGGRSSFGGSLVIIKCHEDKGLIEETIAADGGGKILLIDGGGSSRRALVDAAIAEQAMDNDWEGIVCYGAVREVDALEELDIGILGVASIPVGAISEGVGELNVPVNFGGVTFLPEDHLYIDTTGVILSPEPLDIE.

It belongs to the RraA family. In terms of assembly, homotrimer. Binds to both RNA-binding sites in the C-terminal region of Rne and to RhlB.

The protein localises to the cytoplasm. Its function is as follows. Globally modulates RNA abundance by binding to RNase E (Rne) and regulating its endonucleolytic activity. Can modulate Rne action in a substrate-dependent manner by altering the composition of the degradosome. Modulates RNA-binding and helicase activities of the degradosome. The polypeptide is Regulator of ribonuclease activity A (Idiomarina loihiensis (strain ATCC BAA-735 / DSM 15497 / L2-TR)).